A 348-amino-acid chain; its full sequence is Dihydroorotase (348 aa).

Residues H13 and H15 each coordinate Zn(2+). Substrate is bound by residues 15-17 (HLR) and N41. The Zn(2+) site is built by K99, H136, and H174. An N6-carboxylysine modification is found at K99. A substrate-binding site is contributed by H136. L219 contributes to the substrate binding site. D247 is a Zn(2+) binding site. Residue D247 is part of the active site. H251 and A263 together coordinate substrate.

The protein belongs to the metallo-dependent hydrolases superfamily. DHOase family. Class II DHOase subfamily. As to quaternary structure, homodimer. Requires Zn(2+) as cofactor.

It catalyses the reaction (S)-dihydroorotate + H2O = N-carbamoyl-L-aspartate + H(+). The protein operates within pyrimidine metabolism; UMP biosynthesis via de novo pathway; (S)-dihydroorotate from bicarbonate: step 3/3. Catalyzes the reversible cyclization of carbamoyl aspartate to dihydroorotate. This is Dihydroorotase from Coxiella burnetii (strain RSA 331 / Henzerling II).